The following is a 392-amino-acid chain: Glutamine synthetase (392 aa).

The GS beta-grasp domain occupies Val-26–Arg-106. A GS catalytic domain is found at Leu-113 to Phe-392. Glu-134 contacts ATP. The Mn(2+) site is built by Glu-134, Glu-136, Glu-196, and Glu-203. Glu-203 to Pro-208 lines the ATP pocket. Residue Asn-246–Trp-247 participates in L-glutamate binding. His-253 serves as a coordination point for Mn(2+). ATP is bound by residues Asn-255–Ser-257, Arg-319, and Arg-324. Arg-319 lines the L-glutamate pocket. Tyr-336–Glu-338 provides a ligand contact to ADP. Glu-338 provides a ligand contact to Mn(2+). An L-glutamate-binding site is contributed by Arg-340.

It belongs to the glutamine synthetase family. The cofactor is Mg(2+). Mn(2+) is required as a cofactor.

Its subcellular location is the cytoplasm. The protein resides in the cytosol. The protein localises to the microsome. It is found in the mitochondrion. It carries out the reaction L-glutamate + NH4(+) + ATP = L-glutamine + ADP + phosphate + H(+). Functionally, glutamine synthetase that catalyzes the ATP-dependent conversion of glutamate and ammonia to glutamine. The chain is Glutamine synthetase from Xenopus laevis (African clawed frog).